Reading from the N-terminus, the 467-residue chain is Asparagine--tRNA ligase (467 aa).

This sequence belongs to the class-II aminoacyl-tRNA synthetase family. As to quaternary structure, homodimer.

It is found in the cytoplasm. The catalysed reaction is tRNA(Asn) + L-asparagine + ATP = L-asparaginyl-tRNA(Asn) + AMP + diphosphate + H(+). The polypeptide is Asparagine--tRNA ligase (Actinobacillus succinogenes (strain ATCC 55618 / DSM 22257 / CCUG 43843 / 130Z)).